The primary structure comprises 785 residues: Ubiquitin carboxyl-terminal hydrolase 10 (785 aa).

2 stretches are compositionally biased toward polar residues: residues 113–122 (LTLDSGSNAE) and 262–277 (DTTE…TLES). Disordered regions lie at residues 113 to 145 (LTLD…PPGY) and 262 to 314 (DTTE…ATAT). The span at 290–304 (HTVESTDSDQAKPEE) shows a compositional bias: basic and acidic residues. Residues 305-314 (ASPTTEATAT) are compositionally biased toward low complexity. Residues 401–782 (RGLINKGNWC…TAYLLYYRRV (382 aa)) enclose the USP domain. The active-site Nucleophile is Cys-410. A disordered region spans residues 537 to 581 (EKLSVSNGPEVQTVREEEEQDEQGEGSEDEWEQVGPRNKSSVTRQ). Positions 552-568 (EEEEQDEQGEGSEDEWE) are enriched in acidic residues. The Proton acceptor role is filled by His-736.

The protein belongs to the peptidase C19 family. USP10 subfamily.

It localises to the cytoplasm. The protein resides in the nucleus. The catalysed reaction is Thiol-dependent hydrolysis of ester, thioester, amide, peptide and isopeptide bonds formed by the C-terminal Gly of ubiquitin (a 76-residue protein attached to proteins as an intracellular targeting signal).. Its function is as follows. Hydrolase that can remove conjugated ubiquitin from target proteins such as p53/TP53, RPS2/us5, RPS3/us3, RPS10/eS10, BECN1, SNX3 and CFTR. Acts as an essential regulator of p53/TP53 stability: in unstressed cells, specifically deubiquitinates p53/TP53 in the cytoplasm, leading to counteracts MDM2 action and stabilize p53/TP53. Following DNA damage, translocates to the nucleus and deubiquitinates p53/TP53, leading to regulate the p53/TP53-dependent DNA damage response. Component of a regulatory loop that controls autophagy and p53/TP53 levels. Plays a key role in 40S ribosome subunit recycling when a ribosome has stalled during translation: acts both by inhibiting formation of stress granules, which store stalled translation pre-initiation complexes, and mediating deubiquitination of 40S ribosome subunits. Deubiquitinates CFTR in early endosomes, enhancing its endocytic recycling. This is Ubiquitin carboxyl-terminal hydrolase 10 (USP10) from Gallus gallus (Chicken).